Reading from the N-terminus, the 343-residue chain is MSDSPITQRKQDHIDWLLQDEKIERQQAGFDQIQLTHRGLPECDYAQVDSGTTFLQHSLSFPLLISSMTGGASNALNTINENLARAAEHCQVAMAVGSQRTMILDRKAEKSFQLRQFAPTVPLIANMGAIQLNYGFGYDEAQRMVEVLEADALYLHLNPLQEVIQPEGDTNFAKLAEKIAHLKNHLSVPIILKEVGCGLSEKDIQLGLDAGIEWFDLAGRGGTSWSRIEAHRTEDSQQAELGKMFQDWGLTTPQALKQARPFQSQAQFIASGGIRNGIDMVKSVIMGAQICGVAAPLLKPAMASTNATIGTIEQLQQEFRTAQFLLGMPKMADLFLNDSLIVP.

A substrate-binding site is contributed by 9–10 (RK). Residues serine 66, 67–69 (SMT), serine 98, and asparagine 126 each bind FMN. 98–100 (SQR) contributes to the substrate binding site. Glutamine 161 provides a ligand contact to substrate. Glutamate 162 is a binding site for Mg(2+). FMN contacts are provided by residues lysine 193, threonine 223, 273–275 (GIR), and 294–295 (AA).

It belongs to the IPP isomerase type 2 family. As to quaternary structure, homooctamer. Dimer of tetramers. Requires FMN as cofactor. The cofactor is NADPH. It depends on Mg(2+) as a cofactor.

The protein localises to the cytoplasm. It carries out the reaction isopentenyl diphosphate = dimethylallyl diphosphate. Its function is as follows. Involved in the biosynthesis of isoprenoids. Catalyzes the 1,3-allylic rearrangement of the homoallylic substrate isopentenyl (IPP) to its allylic isomer, dimethylallyl diphosphate (DMAPP). This is Isopentenyl-diphosphate delta-isomerase from Hydrogenovibrio crunogenus (strain DSM 25203 / XCL-2) (Thiomicrospira crunogena).